Consider the following 126-residue polypeptide: MEFPKNLRYSEEHEWVRVEGNKAYIGITSFAQAELGDIVFVELPEVGATIQQDEPFGSVESVKTVSELYAPVTGKVVEVNGELEDAPELVNSSPYEQAWMIVVELSDTAELDKLMDADKYEAMVKE.

A Lipoyl-binding domain is found at 22 to 104 (KAYIGITSFA…YEQAWMIVVE (83 aa)). Lys63 carries the N6-lipoyllysine modification.

Belongs to the GcvH family. As to quaternary structure, the glycine cleavage system is composed of four proteins: P, T, L and H. Requires (R)-lipoate as cofactor.

The glycine cleavage system catalyzes the degradation of glycine. The H protein shuttles the methylamine group of glycine from the P protein to the T protein. In terms of biological role, is also involved in protein lipoylation via its role as an octanoyl/lipoyl carrier protein intermediate. The chain is Glycine cleavage system H protein from Brevibacillus brevis (strain 47 / JCM 6285 / NBRC 100599).